The sequence spans 198 residues: HTH-type transcriptional regulator BetI (198 aa).

An HTH tetR-type domain is found at 8–68 (PIRRQQLIEA…ATMRYLIRHL (61 aa)). Positions 31 to 50 (SIAQIAKRAGVSNGIISHYF) form a DNA-binding region, H-T-H motif.

Its pathway is amine and polyamine biosynthesis; betaine biosynthesis via choline pathway [regulation]. In terms of biological role, repressor involved in the biosynthesis of the osmoprotectant glycine betaine. It represses transcription of the choline transporter BetT and the genes of BetAB involved in the synthesis of glycine betaine. This chain is HTH-type transcriptional regulator BetI, found in Yersinia pseudotuberculosis serotype O:1b (strain IP 31758).